The primary structure comprises 122 residues: Large ribosomal subunit protein uL14c (122 aa).

Belongs to the universal ribosomal protein uL14 family. As to quaternary structure, part of the 50S ribosomal subunit.

Its subcellular location is the plastid. The protein resides in the chloroplast. Binds to 23S rRNA. This Daucus carota (Wild carrot) protein is Large ribosomal subunit protein uL14c.